A 674-amino-acid chain; its full sequence is Probable 3',5'-cyclic-AMP phosphodiesterase pde-4 (674 aa).

The tract at residues 1–82 (MPRRRGSSSS…TSSASSYHPP (82 aa)) is disordered. Gly residues predominate over residues 15–24 (GGSGGGGGFG). The segment covering 39–62 (RTSSPSASSTSRTPPAALPPRTSA) has biased composition (low complexity). Positions 66–78 (PGSNHKLTSSASS) are enriched in polar residues. In terms of domain architecture, PDEase spans 328 to 660 (HVPEYGVNCA…EWYQSRIPEE (333 aa)). Catalysis depends on His-407, which acts as the Proton donor. Residues His-411, His-447, Asp-448, and Asp-565 each coordinate a divalent metal cation.

Belongs to the cyclic nucleotide phosphodiesterase family. Requires a divalent metal cation as cofactor. As to expression, expressed in dorsal D (DD) motor neurons and several other neurons at the L1 stage. Expression in DD neurons decreases gradually beginning in the late L1 stage. Highly expressed in adult ventral D (VD) motor neurons, but diminished in adult DD motor neurons.

The catalysed reaction is 3',5'-cyclic AMP + H2O = AMP + H(+). In terms of biological role, hydrolyzes the second messenger 3',5'-cyclic AMP (cAMP), which is a key regulator of many important physiological processes. Antagonizes dorsal D (DD) motor neuron respecification by reducing levels of cAMP. The protein is Probable 3',5'-cyclic-AMP phosphodiesterase pde-4 (pde-4) of Caenorhabditis elegans.